The sequence spans 173 residues: Bifunctional protein PyrR (173 aa).

The PRPP-binding signature appears at 93–105; the sequence is VILVDDVLYTGRT.

This sequence belongs to the purine/pyrimidine phosphoribosyltransferase family. PyrR subfamily. As to quaternary structure, homodimer and homohexamer; in equilibrium.

It carries out the reaction UMP + diphosphate = 5-phospho-alpha-D-ribose 1-diphosphate + uracil. Regulates transcriptional attenuation of the pyrimidine nucleotide (pyr) operon by binding in a uridine-dependent manner to specific sites on pyr mRNA. This disrupts an antiterminator hairpin in the RNA and favors formation of a downstream transcription terminator, leading to a reduced expression of downstream genes. Its function is as follows. Also displays a weak uracil phosphoribosyltransferase activity which is not physiologically significant. The sequence is that of Bifunctional protein PyrR from Streptococcus pneumoniae (strain 70585).